Reading from the N-terminus, the 404-residue chain is Cysteine desulfurase IscS (404 aa).

Pyridoxal 5'-phosphate is bound by residues 75-76, N155, Q183, and 203-205; these read AT and SAH. The residue at position 206 (K206) is an N6-(pyridoxal phosphate)lysine. T243 contributes to the pyridoxal 5'-phosphate binding site. C328 acts as the Cysteine persulfide intermediate in catalysis. C328 provides a ligand contact to [2Fe-2S] cluster.

This sequence belongs to the class-V pyridoxal-phosphate-dependent aminotransferase family. NifS/IscS subfamily. In terms of assembly, homodimer. Forms a heterotetramer with IscU, interacts with other sulfur acceptors. Pyridoxal 5'-phosphate is required as a cofactor.

The protein resides in the cytoplasm. The catalysed reaction is (sulfur carrier)-H + L-cysteine = (sulfur carrier)-SH + L-alanine. It participates in cofactor biosynthesis; iron-sulfur cluster biosynthesis. Master enzyme that delivers sulfur to a number of partners involved in Fe-S cluster assembly, tRNA modification or cofactor biosynthesis. Catalyzes the removal of elemental sulfur atoms from cysteine to produce alanine. Functions as a sulfur delivery protein for Fe-S cluster synthesis onto IscU, an Fe-S scaffold assembly protein, as well as other S acceptor proteins. The protein is Cysteine desulfurase IscS of Pseudomonas entomophila (strain L48).